We begin with the raw amino-acid sequence, 85 residues long: Small ribosomal subunit protein bS20 (85 aa).

Belongs to the bacterial ribosomal protein bS20 family.

Functionally, binds directly to 16S ribosomal RNA. The polypeptide is Small ribosomal subunit protein bS20 (Borrelia hermsii (strain HS1 / DAH)).